Here is a 185-residue protein sequence, read N- to C-terminus: MRNQKGVTVWFTGLSGAGKTTVAREVERQLKEKGYYVQRLDGDIVRQHLTRDLGFTKEDRDENIRRNSFVAKLLTQNDIITLCSFISPYRKARQTAREIIGEFIEVYVNAPLEVCEDRDVKGLYAKARAGEIDNFTGISDPYEPPQNPDLELRTDKETVEESASKVIEYLEEKGYINLPEDVLAG.

13–20 (GLSGAGKT) lines the ATP pocket. Catalysis depends on Ser87, which acts as the Phosphoserine intermediate.

The protein belongs to the APS kinase family.

It catalyses the reaction adenosine 5'-phosphosulfate + ATP = 3'-phosphoadenylyl sulfate + ADP + H(+). Its pathway is sulfur metabolism; hydrogen sulfide biosynthesis; sulfite from sulfate: step 2/3. Catalyzes the synthesis of activated sulfate. This chain is Adenylyl-sulfate kinase, found in Halothermothrix orenii (strain H 168 / OCM 544 / DSM 9562).